The chain runs to 154 residues: N-acetylneuraminate anomerase NanQ (154 aa).

The protein belongs to the NanQ anomerase family. Zn(2+) serves as cofactor.

The protein localises to the cytoplasm. The catalysed reaction is N-acetyl-alpha-neuraminate = aceneuramate. It catalyses the reaction N-acetyl-beta-neuraminate = aceneuramate. With respect to regulation, inhibited by 1,10-phenanthroline. Opens both the alpha- and beta-forms of N-acetylneuraminate (sialic acid; Neu5Ac) to provide aceneuramate, the preferred substrate for NanA. Has preferential activity on the beta-anomer rather than the alpha-anomer. Accelerates a reaction that is spontaneous at slightly alkaline pH, facilitates the reaction at acidic pH. The sequence is that of N-acetylneuraminate anomerase NanQ from Escherichia coli (strain K12).